We begin with the raw amino-acid sequence, 310 residues long: Delta(1)-pyrroline-2-carboxylate reductase 1 (310 aa).

It belongs to the ornithine cyclodeaminase/mu-crystallin family.

The catalysed reaction is L-proline + NAD(+) = 1-pyrroline-2-carboxylate + NADH + H(+). The enzyme catalyses L-proline + NADP(+) = 1-pyrroline-2-carboxylate + NADPH + H(+). In terms of biological role, catalyzes the reduction of Delta(1)-pyrroline-2-carboxylate (Pyr2C) to L-proline, using NADPH as the electron donor. May be involved in a degradation pathway that converts trans-3-hydroxy-L-proline (t3LHyp) to L-proline. This is Delta(1)-pyrroline-2-carboxylate reductase 1 from Burkholderia multivorans (strain ATCC 17616 / 249).